Consider the following 274-residue polypeptide: Triosephosphate isomerase (274 aa).

Residue 31–33 (NWK) participates in substrate binding. Residue histidine 118 is the Electrophile of the active site. Residue glutamate 188 is the Proton acceptor of the active site. Substrate contacts are provided by residues glycine 194, serine 234, and 255–256 (GG).

This sequence belongs to the triosephosphate isomerase family. Homodimer.

The protein resides in the cytoplasm. The enzyme catalyses D-glyceraldehyde 3-phosphate = dihydroxyacetone phosphate. Its pathway is carbohydrate biosynthesis; gluconeogenesis. It functions in the pathway carbohydrate degradation; glycolysis; D-glyceraldehyde 3-phosphate from glycerone phosphate: step 1/1. Its function is as follows. Involved in the gluconeogenesis. Catalyzes stereospecifically the conversion of dihydroxyacetone phosphate (DHAP) to D-glyceraldehyde-3-phosphate (G3P). The polypeptide is Triosephosphate isomerase (Chlamydia trachomatis serovar L2 (strain ATCC VR-902B / DSM 19102 / 434/Bu)).